We begin with the raw amino-acid sequence, 741 residues long: Isocitrate dehydrogenase [NADP] (741 aa).

Residues asparagine 85 and serine 87 each coordinate NADP(+). D-threo-isocitrate contacts are provided by serine 132, asparagine 135, arginine 139, arginine 145, and lysine 255. Asparagine 135 serves as a coordination point for NADP(+). A Mn(2+)-binding site is contributed by aspartate 350. D-threo-isocitrate contacts are provided by tyrosine 420 and arginine 547. Aspartate 548 serves as a coordination point for Mn(2+). NADP(+) contacts are provided by serine 585, histidine 589, arginine 600, aspartate 602, and arginine 649.

The protein belongs to the monomeric-type IDH family. Monomer. Mg(2+) serves as cofactor. The cofactor is Mn(2+).

The protein resides in the cytoplasm. The catalysed reaction is D-threo-isocitrate + NADP(+) = 2-oxoglutarate + CO2 + NADPH. Activity is inhibited in the presence of Ca(2+). Functionally, catalyzes the oxidative decarboxylation of isocitrate to 2-oxoglutarate and carbon dioxide with the concomitant reduction of NADP(+). The sequence is that of Isocitrate dehydrogenase [NADP] from Azotobacter vinelandii.